Here is a 293-residue protein sequence, read N- to C-terminus: Ribosomal RNA small subunit methyltransferase H (293 aa).

S-adenosyl-L-methionine is bound by residues 31–33, Asp49, Phe76, Asp97, and Gln104; that span reads GGY.

The protein belongs to the methyltransferase superfamily. RsmH family.

It localises to the cytoplasm. It carries out the reaction cytidine(1402) in 16S rRNA + S-adenosyl-L-methionine = N(4)-methylcytidine(1402) in 16S rRNA + S-adenosyl-L-homocysteine + H(+). Its function is as follows. Specifically methylates the N4 position of cytidine in position 1402 (C1402) of 16S rRNA. The polypeptide is Ribosomal RNA small subunit methyltransferase H (Wolbachia sp. subsp. Drosophila simulans (strain wRi)).